A 305-amino-acid polypeptide reads, in one-letter code: Regulator of microtubule dynamics protein 1 (305 aa).

Position 160 is an N6-succinyllysine (K160). TPR repeat units follow at residues 163-199 (AICI…NPKD) and 217-253 (PWYQ…DPNF). Residue K245 is modified to N6-succinyllysine.

The protein belongs to the RMDN family. In terms of assembly, interacts with microtubules.

The protein localises to the cytoplasm. The protein resides in the cytoskeleton. It is found in the spindle. It localises to the spindle pole. The polypeptide is Regulator of microtubule dynamics protein 1 (Rmdn1) (Mus musculus (Mouse)).